Here is a 327-residue protein sequence, read N- to C-terminus: MSLSPPNNLEHIITSQTLKWVFVGGKGGVGKTTTSCSLGVLIANRNPQKKVLIISTDPAHNTSDAFDIKFGAEPKAVPGVPNLSVMEVDVKDAMKGMFDGVEQGTNQNGEFGLLSEITGMVGMFKSVPGIDEAIAFSKIINQAQQMNYDLVLFDTAPTGHTLRFLSLPSVLRDMLEKVIKLQELFGPMMSQFGGIIGTNINFNELKPKMEDMLKTSEQIVKDFTNPNLTTFIPVLIPEFLPLYETERLIQELMNLNMDVNSIIVNQILPVNDCCDYCKNKRSVQAKYLGQIDVLYSDFHLIKINMQTNEVRGVPALCAFSKNFEAKH.

Residue 26–33 participates in ATP binding; that stretch reads KGGVGKTT. Aspartate 57 is a catalytic residue. Residues glutamate 238 and asparagine 265 each contribute to the ATP site. Residues cysteine 274 and cysteine 277 each coordinate Zn(2+).

Belongs to the arsA ATPase family. In terms of assembly, homodimer.

Its subcellular location is the cytoplasm. It localises to the endoplasmic reticulum. Its function is as follows. ATPase required for the post-translational delivery of tail-anchored (TA) proteins to the endoplasmic reticulum. Recognizes and selectively binds the transmembrane domain of TA proteins in the cytosol. This complex then targets to the endoplasmic reticulum by membrane-bound receptors, where the tail-anchored protein is released for insertion. This process is regulated by ATP binding and hydrolysis. ATP binding drives the homodimer towards the closed dimer state, facilitating recognition of newly synthesized TA membrane proteins. ATP hydrolysis is required for insertion. Subsequently, the homodimer reverts towards the open dimer state, lowering its affinity for the membrane-bound receptor, and returning it to the cytosol to initiate a new round of targeting. This is ATPase ASNA1 homolog from Entamoeba dispar (strain ATCC PRA-260 / SAW760).